Reading from the N-terminus, the 78-residue chain is Defensin-like protein 173 (78 aa).

The first 23 residues, 1–23 (MAKAPSPLVFPIIFLIIFALVEP), serve as a signal peptide directing secretion. Intrachain disulfides connect Cys-27-Cys-71, Cys-34-Cys-56, Cys-40-Cys-65, and Cys-44-Cys-67.

The protein belongs to the DEFL family.

The protein resides in the secreted. In Arabidopsis thaliana (Mouse-ear cress), this protein is Defensin-like protein 173 (LCR63).